The primary structure comprises 426 residues: Serine--tRNA ligase (426 aa).

Threonine 230–glutamate 232 provides a ligand contact to L-serine. Arginine 261–glutamate 263 provides a ligand contact to ATP. Residue glutamate 284 coordinates L-serine. Glutamate 348–serine 351 is an ATP binding site. Serine 384 contributes to the L-serine binding site.

The protein belongs to the class-II aminoacyl-tRNA synthetase family. Type-1 seryl-tRNA synthetase subfamily. Homodimer. The tRNA molecule binds across the dimer.

The protein resides in the cytoplasm. The catalysed reaction is tRNA(Ser) + L-serine + ATP = L-seryl-tRNA(Ser) + AMP + diphosphate + H(+). It catalyses the reaction tRNA(Sec) + L-serine + ATP = L-seryl-tRNA(Sec) + AMP + diphosphate + H(+). The protein operates within aminoacyl-tRNA biosynthesis; selenocysteinyl-tRNA(Sec) biosynthesis; L-seryl-tRNA(Sec) from L-serine and tRNA(Sec): step 1/1. Its function is as follows. Catalyzes the attachment of serine to tRNA(Ser). Is also able to aminoacylate tRNA(Sec) with serine, to form the misacylated tRNA L-seryl-tRNA(Sec), which will be further converted into selenocysteinyl-tRNA(Sec). In Novosphingobium aromaticivorans (strain ATCC 700278 / DSM 12444 / CCUG 56034 / CIP 105152 / NBRC 16084 / F199), this protein is Serine--tRNA ligase.